The chain runs to 182 residues: MSKKKEKKFQESKISTRSYRSTTMLRHQIRRITTANRLLDELKTSKDIEKFLNNSTWSIKELLQQPLTNTTTKEVSSDVVTKMLKLSGLSDSQDIQNIRKSLNLQMMFINHLYDKSGNNAEKKVNDNNCMFRLLASDHIPQRPLDLDTLMDEINKLEPSEEKGEIGFGIKDLQRDSFVINKK.

This sequence belongs to the GatF family. Subunit of the heterotrimeric GatFAB amidotransferase (AdT) complex, composed of A, B and F subunits.

It localises to the mitochondrion inner membrane. It catalyses the reaction L-glutamyl-tRNA(Gln) + L-glutamine + ATP + H2O = L-glutaminyl-tRNA(Gln) + L-glutamate + ADP + phosphate + H(+). In terms of biological role, allows the formation of correctly charged Gln-tRNA(Gln) through the transamidation of misacylated Glu-tRNA(Gln) in the mitochondria. The reaction takes place in the presence of glutamine and ATP through an activated gamma-phospho-Glu-tRNA(Gln). Required for proper protein synthesis within the mitochondrion. The chain is Glutamyl-tRNA(Gln) amidotransferase subunit F, mitochondrial from Candida tropicalis (strain ATCC MYA-3404 / T1) (Yeast).